Consider the following 516-residue polypeptide: Probable rhamnogalacturonase B (516 aa).

The first 21 residues, 1-21 (MRLHAFTLLSLLGLVPSFAAA), serve as a signal peptide directing secretion. Cys-42 and Cys-68 form a disulfide bridge. Asn-145 carries N-linked (GlcNAc...) asparagine glycosylation. Catalysis depends on Asp-219, which acts as the Proton donor. Cysteines 221 and 238 form a disulfide. N-linked (GlcNAc...) asparagine glycosylation occurs at Asn-239. Residue His-294 is part of the active site. Residue Asn-321 is glycosylated (N-linked (GlcNAc...) asparagine). Cystine bridges form between Cys-344-Cys-350 and Cys-372-Cys-381. The disordered stretch occupies residues 462–516 (ETPAAASRSEQVVQGASQETSQPAPESAGPVRSVPTGGNRPSRHRHGHHHFWIAA). A compositionally biased stretch (polar residues) spans 469 to 485 (RSEQVVQGASQETSQPA). A compositionally biased stretch (basic residues) spans 502–516 (PSRHRHGHHHFWIAA).

Belongs to the glycosyl hydrolase 28 family.

Its subcellular location is the secreted. The enzyme catalyses Endohydrolysis of alpha-D-GalA-(1-&gt;2)-alpha-L-Rha glycosidic bond in the rhamnogalacturonan I backbone with initial inversion of anomeric configuration releasing oligosaccharides with beta-D-GalA at the reducing end.. Functionally, pectinolytic enzymes consist of four classes of enzymes: pectine lyase, polygalacturonase, pectin methylesterase and rhamnogalacturonase. Hydrolyzes alpha-D-galacturonopyranosyl-(1,2)-alpha-L-rhamnopyranosyl linkages in the backbone of the hairy regions of pectins. This Neosartorya fischeri (strain ATCC 1020 / DSM 3700 / CBS 544.65 / FGSC A1164 / JCM 1740 / NRRL 181 / WB 181) (Aspergillus fischerianus) protein is Probable rhamnogalacturonase B (rhgB).